Consider the following 339-residue polypeptide: Serpentine receptor class gamma-7 (339 aa).

A run of 7 helical transmembrane segments spans residues 30 to 50 (YWIQCLWLIPTLFLLVWIIIT), 65 to 85 (WILTADCVVSIILILLDLFVV), 98 to 118 (FSTIFINYPIISDIYFPIYNY), 152 to 172 (IPLFLTIICILPILVVWNTVI), 200 to 220 (LHLTFIFVSISFILISSLLLM), 239 to 259 (SIFIIVAFFFQAAFQSFYAFF), and 268 to 288 (FLVDFQFIIYDVMTVGYPLIF). A disordered region spans residues 319 to 339 (PFNNTMPRQESPSPNYDSILA).

Belongs to the nematode receptor-like protein srg family.

It localises to the membrane. This Caenorhabditis elegans protein is Serpentine receptor class gamma-7 (srg-7).